Here is a 282-residue protein sequence, read N- to C-terminus: Pantothenate synthetase (282 aa).

30-37 (MGFLHDGH) is an ATP binding site. Histidine 37 acts as the Proton donor in catalysis. Glutamine 60 is a binding site for (R)-pantoate. Residue glutamine 60 coordinates beta-alanine. ATP is bound at residue 146-149 (GQKD). Glutamine 152 is a (R)-pantoate binding site. Residues isoleucine 175 and 183-186 (KSSR) each bind ATP.

This sequence belongs to the pantothenate synthetase family. As to quaternary structure, homodimer.

Its subcellular location is the cytoplasm. It carries out the reaction (R)-pantoate + beta-alanine + ATP = (R)-pantothenate + AMP + diphosphate + H(+). The protein operates within cofactor biosynthesis; (R)-pantothenate biosynthesis; (R)-pantothenate from (R)-pantoate and beta-alanine: step 1/1. Functionally, catalyzes the condensation of pantoate with beta-alanine in an ATP-dependent reaction via a pantoyl-adenylate intermediate. This Campylobacter jejuni subsp. jejuni serotype O:23/36 (strain 81-176) protein is Pantothenate synthetase.